Reading from the N-terminus, the 313-residue chain is D-alanine--D-alanine ligase (313 aa).

Positions 108-308 constitute an ATP-grasp domain; it reads KLVWQQLGIP…YQELVVKVLA (201 aa). 138–193 provides a ligand contact to ATP; the sequence is VAKLGLPLFVKPASEGSSVAVIKVKTADALVPALEEAVKFDKIVVVEKSIEGGGEY. Residues D262, E275, and N277 each coordinate Mg(2+).

The protein belongs to the D-alanine--D-alanine ligase family. Requires Mg(2+) as cofactor. The cofactor is Mn(2+).

The protein localises to the cytoplasm. It catalyses the reaction 2 D-alanine + ATP = D-alanyl-D-alanine + ADP + phosphate + H(+). It functions in the pathway cell wall biogenesis; peptidoglycan biosynthesis. Cell wall formation. This chain is D-alanine--D-alanine ligase, found in Paraburkholderia phymatum (strain DSM 17167 / CIP 108236 / LMG 21445 / STM815) (Burkholderia phymatum).